Reading from the N-terminus, the 100-residue chain is NADH-quinone oxidoreductase subunit K (100 aa).

3 helical membrane-spanning segments follow: residues I2 to F22, I28 to A48, and F64 to F84.

The protein belongs to the complex I subunit 4L family. As to quaternary structure, NDH-1 is composed of 14 different subunits. Subunits NuoA, H, J, K, L, M, N constitute the membrane sector of the complex.

Its subcellular location is the cell inner membrane. The enzyme catalyses a quinone + NADH + 5 H(+)(in) = a quinol + NAD(+) + 4 H(+)(out). Its function is as follows. NDH-1 shuttles electrons from NADH, via FMN and iron-sulfur (Fe-S) centers, to quinones in the respiratory chain. The immediate electron acceptor for the enzyme in this species is believed to be ubiquinone. Couples the redox reaction to proton translocation (for every two electrons transferred, four hydrogen ions are translocated across the cytoplasmic membrane), and thus conserves the redox energy in a proton gradient. The sequence is that of NADH-quinone oxidoreductase subunit K from Desulfovibrio desulfuricans (strain ATCC 27774 / DSM 6949 / MB).